Here is a 170-residue protein sequence, read N- to C-terminus: Interferon gamma (170 aa).

Positions 1–20 are cleaved as a signal peptide; it reads MNSRLCIMALLLCFSQALLG. Residues Asn36 and Asn103 are each glycosylated (N-linked (GlcNAc...) asparagine).

The protein belongs to the type II (or gamma) interferon family. In terms of assembly, homodimer. Interacts with IFNGR1 (via extracellular domain); this interaction promotes IFNGR1 dimerization. Released primarily from activated T lymphocytes.

Its subcellular location is the secreted. In terms of biological role, type II interferon produced by immune cells such as T-cells and NK cells that plays crucial roles in antimicrobial, antiviral, and antitumor responses by activating effector immune cells and enhancing antigen presentation. Primarily signals through the JAK-STAT pathway after interaction with its receptor IFNGR1 to affect gene regulation. Upon IFNG binding, IFNGR1 intracellular domain opens out to allow association of downstream signaling components JAK2, JAK1 and STAT1, leading to STAT1 activation, nuclear translocation and transcription of IFNG-regulated genes. Many of the induced genes are transcription factors such as IRF1 that are able to further drive regulation of a next wave of transcription. Plays a role in class I antigen presentation pathway by inducing a replacement of catalytic proteasome subunits with immunoproteasome subunits. In turn, increases the quantity, quality, and repertoire of peptides for class I MHC loading. Increases the efficiency of peptide generation also by inducing the expression of activator PA28 that associates with the proteasome and alters its proteolytic cleavage preference. Up-regulates as well MHC II complexes on the cell surface by promoting expression of several key molecules such as cathepsins B/CTSB, H/CTSH, and L/CTSL. Participates in the regulation of hematopoietic stem cells during development and under homeostatic conditions by affecting their development, quiescence, and differentiation. The protein is Interferon gamma (IFNG) of Sigmodon hispidus (Hispid cotton rat).